Here is a 673-residue protein sequence, read N- to C-terminus: Hemocyanin subunit C (673 aa).

Residues 1 to 20 (MGAWKVWTFFAIALVVAVKA) form the signal peptide. Cu cation-binding residues include histidine 207, histidine 211, and histidine 237. Asparagine 323 is a glycosylation site (N-linked (GlcNAc...) asparagine). Cu cation is bound by residues histidine 358, histidine 362, and histidine 398. Cysteine 568 and cysteine 616 are oxidised to a cystine.

The protein belongs to the tyrosinase family. Hemocyanin subfamily. As to quaternary structure, 36-chain polymer consisting of 6 hexamers, each of which includes 4 different chains, A, B, C and D. In terms of tissue distribution, hemolymph.

It is found in the secreted. Its subcellular location is the extracellular space. Functionally, hemocyanins are copper-containing oxygen carriers occurring freely dissolved in the hemolymph of many mollusks and arthropods. The polypeptide is Hemocyanin subunit C (HCC) (Scutigera coleoptrata (House centipede)).